The primary structure comprises 342 residues: Ubiquitin fusion degradation protein 1 homolog (342 aa).

Disordered regions lie at residues 245 to 276 (FGGAGRRLDGKKKPSSSVSLSDGTGVSTSNAA) and 318 to 342 (EKEASKAGQPSNVFRGGNRTLRGAR). A compositionally biased stretch (polar residues) spans 259-275 (SSSVSLSDGTGVSTSNA).

This sequence belongs to the UFD1 family. As to quaternary structure, forms a complex composed of ubxn-3, ufd-1, npl-4.1 and cdc-48.1; within the complex interacts with cdc-48.1. Interacts with cdc-48.2. Interacts with npl-4.1 and/or npl-4.2.

It localises to the cytoplasm. Its subcellular location is the nucleus. Functions at a post-ubiquitination step in the ubiquitin fusion degradation (UFD) pathway. In association with npl-4.1 and/or npl-4.2 and ATPase cdc-48.1 and/or cdc-48.2, involved in the cytoplasmic elimination of misfolded proteins exported from the ER. This pathway, known as ERAD, prevents the activation of the unfolded protein response (UPR) caused by the accumulation of misfolded proteins in the ER. During S phase and in association with npl-4.1 and/or npl-4.2, cdc-48.1 and/or cdc-48.2 and ubxn-3, ensures the degradation of DNA licensing factor cdt-1 after the initiation of DNA replication and thus the disassembly of the DNA replication CMG helicase complex by promoting the dissociation from chromatin of several of its components including cdc-45 and sld-5. Regulates ubxn-3 nuclear localization during S phase. This Caenorhabditis elegans protein is Ubiquitin fusion degradation protein 1 homolog (ufd-1).